A 60-amino-acid polypeptide reads, in one-letter code: Large ribosomal subunit protein bL32 (60 aa).

The interval 1–60 (MAVQQNKKSRSARDMRRSHDALSENALSVEKTTGEVHLRHHVSPEGVYRGRKVVDKGADE) is disordered. Residues 11 to 22 (SARDMRRSHDAL) show a composition bias toward basic and acidic residues.

The protein belongs to the bacterial ribosomal protein bL32 family.

The sequence is that of Large ribosomal subunit protein bL32 from Pseudomonas putida (strain ATCC 700007 / DSM 6899 / JCM 31910 / BCRC 17059 / LMG 24140 / F1).